A 511-amino-acid polypeptide reads, in one-letter code: Putative thymidine phosphorylase (511 aa).

It belongs to the thymidine/pyrimidine-nucleoside phosphorylase family. Type 2 subfamily.

The catalysed reaction is thymidine + phosphate = 2-deoxy-alpha-D-ribose 1-phosphate + thymine. This chain is Putative thymidine phosphorylase, found in Polaromonas sp. (strain JS666 / ATCC BAA-500).